A 939-amino-acid chain; its full sequence is Translation initiation factor IF-2 (939 aa).

A disordered region spans residues 48 to 355 (KFAPAPKVEN…KPEKKEKEEE (308 aa)). A compositionally biased stretch (low complexity) spans 79 to 93 (QQNQAPKQPQQGTQN). The span at 114–130 (SRDKNSRRDNNNRDGQR) shows a compositional bias: basic and acidic residues. The span at 131-257 (DNNGGYRNND…NNDRNNNGGF (127 aa)) shows a compositional bias: low complexity. The segment covering 287–355 (RNNDRRDSAP…KPEKKEKEEE (69 aa)) has biased composition (basic and acidic residues). Residues 440–609 (PRPPVVCVMG…LLTAEVNELK (170 aa)) enclose the tr-type G domain. A G1 region spans residues 449 to 456 (GHVDHGKT). Residue 449–456 (GHVDHGKT) coordinates GTP. The tract at residues 474–478 (GITQK) is G2. Residues 495–498 (DTPG) form a G3 region. Residues 495–499 (DTPGH) and 549–552 (NKID) contribute to the GTP site. The interval 549 to 552 (NKID) is G4. Residues 585 to 587 (SAH) form a G5 region.

It belongs to the TRAFAC class translation factor GTPase superfamily. Classic translation factor GTPase family. IF-2 subfamily.

The protein resides in the cytoplasm. Its function is as follows. One of the essential components for the initiation of protein synthesis. Protects formylmethionyl-tRNA from spontaneous hydrolysis and promotes its binding to the 30S ribosomal subunits. Also involved in the hydrolysis of GTP during the formation of the 70S ribosomal complex. This chain is Translation initiation factor IF-2, found in Lachnospira eligens (strain ATCC 27750 / DSM 3376 / VPI C15-48 / C15-B4) (Eubacterium eligens).